The sequence spans 1226 residues: DNA-directed RNA polymerase subunit beta (1226 aa).

It belongs to the RNA polymerase beta chain family. In terms of assembly, the RNAP catalytic core consists of 2 alpha, 1 beta, 1 beta' and 1 omega subunit. When a sigma factor is associated with the core the holoenzyme is formed, which can initiate transcription.

The enzyme catalyses RNA(n) + a ribonucleoside 5'-triphosphate = RNA(n+1) + diphosphate. In terms of biological role, DNA-dependent RNA polymerase catalyzes the transcription of DNA into RNA using the four ribonucleoside triphosphates as substrates. The protein is DNA-directed RNA polymerase subunit beta of Leptospira borgpetersenii serovar Hardjo-bovis (strain JB197).